The primary structure comprises 303 residues: RELT-like protein 2 (303 aa).

Residues 15 to 35 (LYMLFLLVLVFFLMGLVGFMI) form a helical membrane-spanning segment. Disordered stretches follow at residues 47–68 (RTSR…DDVN), 135–214 (CSRS…QPRT), and 249–303 (PCTL…AGGM). At serine 52 the chain carries Phosphoserine. Basic and acidic residues-rich tracts occupy residues 148 to 158 (RSKEGKSRPRP) and 172 to 188 (THIE…DGSP). Residues 194–212 (GSGGGQEPGGSQAAGGGQP) are compositionally biased toward gly residues. Residues 274–295 (GLSSQEANGQPTKLDTSGQQES) show a composition bias toward polar residues.

It belongs to the RELT family. Interacts with RELT, RELL1, OXSR1, PLSCR1 and TRAF2.

The protein resides in the cell membrane. Induces activation of MAPK14/p38 cascade, when overexpressed. Induces apoptosis, when overexpressed. This Mus musculus (Mouse) protein is RELT-like protein 2 (Rell2).